A 183-amino-acid polypeptide reads, in one-letter code: Ribosome rescue factor SmrB (183 aa).

The Smr domain occupies 98–173; that stretch reads LDLHGLTQLQ…GDAALLVLIE (76 aa).

The protein belongs to the SmrB family. As to quaternary structure, associates with collided ribosomes, but not with correctly translating polysomes.

Acts as a ribosome collision sensor. Detects stalled/collided disomes (pairs of ribosomes where the leading ribosome is stalled and a second ribosome has collided with it) and endonucleolytically cleaves mRNA at the 5' boundary of the stalled ribosome. Stalled/collided disomes form a new interface (primarily via the 30S subunits) that binds SmrB. Cleaved mRNA becomes available for tmRNA ligation, leading to ribosomal subunit dissociation and rescue of stalled ribosomes. This is Ribosome rescue factor SmrB from Escherichia fergusonii (strain ATCC 35469 / DSM 13698 / CCUG 18766 / IAM 14443 / JCM 21226 / LMG 7866 / NBRC 102419 / NCTC 12128 / CDC 0568-73).